The following is a 194-amino-acid chain: Imidazoleglycerol-phosphate dehydratase (194 aa).

Belongs to the imidazoleglycerol-phosphate dehydratase family.

It is found in the cytoplasm. The catalysed reaction is D-erythro-1-(imidazol-4-yl)glycerol 3-phosphate = 3-(imidazol-4-yl)-2-oxopropyl phosphate + H2O. Its pathway is amino-acid biosynthesis; L-histidine biosynthesis; L-histidine from 5-phospho-alpha-D-ribose 1-diphosphate: step 6/9. This is Imidazoleglycerol-phosphate dehydratase from Sulfurisphaera tokodaii (strain DSM 16993 / JCM 10545 / NBRC 100140 / 7) (Sulfolobus tokodaii).